Here is a 199-residue protein sequence, read N- to C-terminus: Ribonuclease HII (199 aa).

The RNase H type-2 domain maps to 1 to 199 (MCVCGIDEAG…TYKNLVQGHI (199 aa)). A divalent metal cation contacts are provided by D7, E8, and D97.

Belongs to the RNase HII family. The cofactor is Mn(2+). Mg(2+) serves as cofactor.

The protein localises to the cytoplasm. The catalysed reaction is Endonucleolytic cleavage to 5'-phosphomonoester.. Functionally, endonuclease that specifically degrades the RNA of RNA-DNA hybrids. The protein is Ribonuclease HII of Picrophilus torridus (strain ATCC 700027 / DSM 9790 / JCM 10055 / NBRC 100828 / KAW 2/3).